A 317-amino-acid chain; its full sequence is uncharacterized protein (317 aa).

The protein belongs to the asfivirus F317L family.

The protein localises to the virion. This is an uncharacterized protein from African swine fever virus (isolate Tick/South Africa/Pretoriuskop Pr4/1996) (ASFV).